The chain runs to 323 residues: Transposase for insertion sequence element IS6120 (323 aa).

The segment at E300–A323 is disordered. A compositionally biased stretch (low complexity) spans D304–D313.

It belongs to the transposase mutator family.

Required for the transposition of the insertion element. The polypeptide is Transposase for insertion sequence element IS6120 (Mycolicibacterium smegmatis (Mycobacterium smegmatis)).